A 339-amino-acid chain; its full sequence is Uroporphyrinogen decarboxylase (339 aa).

Substrate-binding positions include 21-25, Asp71, Tyr146, Ser201, and His316; that span reads RQAGR.

Belongs to the uroporphyrinogen decarboxylase family. As to quaternary structure, homodimer.

It is found in the cytoplasm. It catalyses the reaction uroporphyrinogen III + 4 H(+) = coproporphyrinogen III + 4 CO2. It functions in the pathway porphyrin-containing compound metabolism; protoporphyrin-IX biosynthesis; coproporphyrinogen-III from 5-aminolevulinate: step 4/4. In terms of biological role, catalyzes the decarboxylation of four acetate groups of uroporphyrinogen-III to yield coproporphyrinogen-III. This Rickettsia canadensis (strain McKiel) protein is Uroporphyrinogen decarboxylase.